Reading from the N-terminus, the 120-residue chain is Small ribosomal subunit protein eS24 (120 aa).

Residues 101–120 (RDAGTKQKKGGSKGGQGAKG) are disordered.

The protein belongs to the eukaryotic ribosomal protein eS24 family.

The sequence is that of Small ribosomal subunit protein eS24 from Saccharolobus islandicus (strain M.16.27) (Sulfolobus islandicus).